Reading from the N-terminus, the 589-residue chain is Protein PAF1 homolog (589 aa).

Pro residues predominate over residues 1–54 (MASYRPPYPPLPQPPSQNSLAPPPPPPSLPPPVPPPPPSHQPYSYPPPPPPPPH). Disordered stretches follow at residues 1-180 (MASY…PLLT) and 542-589 (GVYS…DYSE). Low complexity predominate over residues 55–65 (AYYQQGPHYPQ). Pro residues predominate over residues 71-87 (APPPPPPPSAPPPLVPD). Basic and acidic residues predominate over residues 88–116 (PPRHQGPNDHEKGASKQVGRRERAKPDPS). Residues 117-127 (KHHHRSHLPHS) are compositionally biased toward basic residues. Residues 126 to 159 (HSKKIETEEERRLRKKRELEKQRQDEKHRQQMKN) adopt a coiled-coil conformation. A compositionally biased stretch (basic and acidic residues) spans 128-154 (KKIETEEERRLRKKRELEKQRQDEKHR).

It belongs to the PAF1 family. As to quaternary structure, component of the nuclear PAF1 complex (PAF1C), which consists of VIP2/ELF7/PAF1, VIP3/SKI8/WDR61, VIP4/LEO1, VIP5/RTF1, VIP6/ELF8/CTR9 and CDC73. In terms of tissue distribution, expressed in roots, leaves and shoot apex.

It localises to the nucleus. Component of the PAF1 complex (PAF1C) which is involved in histone modifications such as methylation on histone H3 'Lys-4' (H3K4me3). Involved in regulation of flowering time. Required for the expression of the flowering repressors and MAD-box genes FLC, AGL27/FLM and AGL31/MAF2. Required for histone H3 trimethylation on 'Lys-4' H3K4me3 at the FLC and AGL27/FLM loci. Involved in the control of seed dormancy and germination. This is Protein PAF1 homolog from Arabidopsis thaliana (Mouse-ear cress).